The chain runs to 560 residues: Dimethylaniline monooxygenase [N-oxide-forming] 4 (560 aa).

FAD is bound by residues 9-13, glutamate 32, and 40-41; these read GAGVS and LW. NADP(+) contacts are provided by residues 60-61 and 195-198; these read TN and TGGD. Residues 519-539 traverse the membrane as a helical segment; that stretch reads APVLIVSLLLIYKSSLFLELV.

The protein belongs to the FMO family. The cofactor is FAD. In terms of tissue distribution, detected in liver and kidney (at protein level).

The protein localises to the microsome membrane. It localises to the endoplasmic reticulum membrane. The catalysed reaction is N,N-dimethylaniline + NADPH + O2 + H(+) = N,N-dimethylaniline N-oxide + NADP(+) + H2O. This protein is involved in the oxidative metabolism of a variety of xenobiotics such as drugs and pesticides. The chain is Dimethylaniline monooxygenase [N-oxide-forming] 4 (Fmo4) from Rattus norvegicus (Rat).